We begin with the raw amino-acid sequence, 253 residues long: tRNA (guanine-N(1)-)-methyltransferase (253 aa).

Residues Gly-111 and 131-136 (LGDFVL) each bind S-adenosyl-L-methionine.

Belongs to the RNA methyltransferase TrmD family. In terms of assembly, homodimer.

The protein localises to the cytoplasm. It carries out the reaction guanosine(37) in tRNA + S-adenosyl-L-methionine = N(1)-methylguanosine(37) in tRNA + S-adenosyl-L-homocysteine + H(+). Functionally, specifically methylates guanosine-37 in various tRNAs. This chain is tRNA (guanine-N(1)-)-methyltransferase, found in Synechococcus sp. (strain JA-3-3Ab) (Cyanobacteria bacterium Yellowstone A-Prime).